The sequence spans 137 residues: MERTFAIIKPDAVERNIIGKILEKVETAGFRIVGMKKILLSKCEAEGFYYVHKERPFFNDLCSFMSRSPVVVMVLERENAINTWREVMGATNPANAEAGTIRKDFGLSIEENSVHGSDSPESAAYEIPYFFSQLELL.

Positions 9, 57, 85, 91, 102, and 112 each coordinate ATP. Residue His-115 is the Pros-phosphohistidine intermediate of the active site.

This sequence belongs to the NDK family. In terms of assembly, homotetramer. Mg(2+) serves as cofactor.

Its subcellular location is the cytoplasm. The catalysed reaction is a 2'-deoxyribonucleoside 5'-diphosphate + ATP = a 2'-deoxyribonucleoside 5'-triphosphate + ADP. The enzyme catalyses a ribonucleoside 5'-diphosphate + ATP = a ribonucleoside 5'-triphosphate + ADP. Major role in the synthesis of nucleoside triphosphates other than ATP. The ATP gamma phosphate is transferred to the NDP beta phosphate via a ping-pong mechanism, using a phosphorylated active-site intermediate. The polypeptide is Nucleoside diphosphate kinase (Geobacter sulfurreducens (strain ATCC 51573 / DSM 12127 / PCA)).